Here is a 424-residue protein sequence, read N- to C-terminus: Phosphomethylpyrimidine synthase 2 (424 aa).

Substrate-binding positions include Asn-65, Met-94, Tyr-123, His-162, 184-186 (SRG), 225-228 (DGLR), and Glu-264. A Zn(2+)-binding site is contributed by His-268. Tyr-291 is a substrate binding site. His-332 serves as a coordination point for Zn(2+). Cys-408, Cys-411, and Cys-415 together coordinate [4Fe-4S] cluster.

The protein belongs to the ThiC family. [4Fe-4S] cluster serves as cofactor.

The catalysed reaction is 5-amino-1-(5-phospho-beta-D-ribosyl)imidazole + S-adenosyl-L-methionine = 4-amino-2-methyl-5-(phosphooxymethyl)pyrimidine + CO + 5'-deoxyadenosine + formate + L-methionine + 3 H(+). Its pathway is cofactor biosynthesis; thiamine diphosphate biosynthesis. In terms of biological role, catalyzes the synthesis of the hydroxymethylpyrimidine phosphate (HMP-P) moiety of thiamine from aminoimidazole ribotide (AIR) in a radical S-adenosyl-L-methionine (SAM)-dependent reaction. In Methanothermobacter thermautotrophicus (strain ATCC 29096 / DSM 1053 / JCM 10044 / NBRC 100330 / Delta H) (Methanobacterium thermoautotrophicum), this protein is Phosphomethylpyrimidine synthase 2.